The primary structure comprises 200 residues: Transcription elongation factor A protein-like 3 (200 aa).

A disordered region spans residues M1–L200. Over residues D20–P36 the composition is skewed to acidic residues. S30 carries the post-translational modification Phosphoserine. Residues D37–D50 are compositionally biased toward basic and acidic residues. Over residues E51–G64 the composition is skewed to acidic residues. Phosphoserine is present on S65. Composition is skewed to basic and acidic residues over residues S65–G80, A96–P107, and D115–R154.

Belongs to the TFS-II family. TFA subfamily.

It localises to the nucleus. Functionally, may be involved in transcriptional regulation. This Homo sapiens (Human) protein is Transcription elongation factor A protein-like 3 (TCEAL3).